Reading from the N-terminus, the 502-residue chain is MAINAQEISALIKKQIENFQPNFDVTETGIVTYIGDGIARARGLDNAMSGELLEFENGAYGMAQNLESNDVGIIILGDFSAIREGDVVKRTGKIMEVPVGEALIGRVVNPLGQPVDGLGDIETTGFRPVETPAPGVMQRKSVSEPLQTGLKAIDALVPIGRGQRELIIGDRQTGKTSVAIDAILNQKGQDMICIYVAIGQKESTVRTQVETLRRYGALDYTIVVTASASQPSPLLFIAPYAGVAMAEEFMYQGKHVLIVYDDLSKQAVAYRELSLLLRRPPGREAYPGDVFYLHSRLLERSAKVSDDLGGGSITALPFIETQAGDISAYIATNVISITDGQIFLQENLFNSGIRPAIDAGSSVSRVGGSAQIKAMKKVAGTLRLDLASYRELEAFTQFGSDLDAATQAKLNRGRRTVEILKQPLHKPLPVEKQVVILYALTHGFLDDVPVDDILAFEEALYDYFDVHYNDLFETIRTTKDLPEEAALDAAIKAFKEHSNFKS.

169–176 (GDRQTGKT) serves as a coordination point for ATP.

Belongs to the ATPase alpha/beta chains family. As to quaternary structure, F-type ATPases have 2 components, CF(1) - the catalytic core - and CF(0) - the membrane proton channel. CF(1) has five subunits: alpha(3), beta(3), gamma(1), delta(1), epsilon(1). CF(0) has three main subunits: a(1), b(2) and c(9-12). The alpha and beta chains form an alternating ring which encloses part of the gamma chain. CF(1) is attached to CF(0) by a central stalk formed by the gamma and epsilon chains, while a peripheral stalk is formed by the delta and b chains.

The protein resides in the cell membrane. It carries out the reaction ATP + H2O + 4 H(+)(in) = ADP + phosphate + 5 H(+)(out). Its function is as follows. Produces ATP from ADP in the presence of a proton gradient across the membrane. The alpha chain is a regulatory subunit. The polypeptide is ATP synthase subunit alpha (Streptococcus pyogenes serotype M12 (strain MGAS9429)).